Reading from the N-terminus, the 222-residue chain is Imidazoleglycerol-phosphate dehydratase (222 aa).

It belongs to the imidazoleglycerol-phosphate dehydratase family.

It catalyses the reaction D-erythro-1-(imidazol-4-yl)glycerol 3-phosphate = 3-(imidazol-4-yl)-2-oxopropyl phosphate + H2O. Its pathway is amino-acid biosynthesis; L-histidine biosynthesis; L-histidine from 5-phospho-alpha-D-ribose 1-diphosphate: step 6/9. This Scheffersomyces stipitis (strain ATCC 58785 / CBS 6054 / NBRC 10063 / NRRL Y-11545) (Yeast) protein is Imidazoleglycerol-phosphate dehydratase (HIS3).